A 61-amino-acid chain; its full sequence is UPF0434 protein Sama_1339 (61 aa).

Belongs to the UPF0434 family.

This is UPF0434 protein Sama_1339 from Shewanella amazonensis (strain ATCC BAA-1098 / SB2B).